The primary structure comprises 202 residues: MNFLCKIVKNCRDEDTQKPSPASAPPDGDDLWLPPPEYVPLKELTSKKNMRNFCINGEVKVCSPNGYSFRILRHILRSFDEIYSGNHRMIGLVKVVVGLALSGAPAPEGMNWVYKLRRTLIFQWADSRGPLEGEELEHSQEITWDDDTEFVGLQMRVSARQCHIQGRIWCIDMNSRACQLWSDMSLQTQRSEEDKDSSLLLE.

A disordered region spans residues 14–33 (EDTQKPSPASAPPDGDDLWL). The PPXY motif signature appears at 35 to 38 (PPEY). Residues 115–151 (KLRRTLIFQWADSRGPLEGEELEHSQEITWDDDTEFV) are essential for glycoprotein binding.

It belongs to the lyssavirus matrix protein family. Homomultimer. Interacts with nucleoprotein and with the cytoplasmic domain of glycoprotein. Interacts with host ATP6V1A; this interaction plays an important role in virion uncoating after viral entry.

The protein localises to the virion membrane. Its subcellular location is the host endomembrane system. It localises to the host cytoplasm. Plays a major role in assembly, budding and uncoating of virion after membrane fusion. Completely covers the ribonucleoprotein coil and keep it in condensed bullet-shaped form. Inhibits viral transcription and stimulates replication. Plays a major role in early induction of TRAIL-mediated apoptosis in infected neurons. Inhibits the integrated stress response (ISR) in the infected cell by blocking the formation of stress granules. In Rabies virus (strain HEP-Flury) (RABV), this protein is Matrix protein (M).